A 168-amino-acid chain; its full sequence is Photosystem I assembly protein Ycf3 (168 aa).

TPR repeat units follow at residues 35-68 (AFTY…EIDP), 72-105 (SYIL…NPFL), and 120-153 (GEQA…TPGN).

This sequence belongs to the Ycf3 family.

It localises to the plastid. Its subcellular location is the chloroplast thylakoid membrane. Essential for the assembly of the photosystem I (PSI) complex. May act as a chaperone-like factor to guide the assembly of the PSI subunits. The sequence is that of Photosystem I assembly protein Ycf3 from Ranunculus macranthus (Large buttercup).